Here is a 1204-residue protein sequence, read N- to C-terminus: Integrator complex subunit 2 (1204 aa).

Residues 428-444 traverse the membrane as a helical segment; the sequence is FVSLSFCMLLAFSTLVS.

This sequence belongs to the Integrator subunit 2 family. In terms of assembly, component of the Integrator complex, composed of core subunits INTS1, INTS2, INTS3, INTS4, INTS5, INTS6, INTS7, INTS8, INTS9/RC74, INTS10, INTS11/CPSF3L, INTS12, INTS13, INTS14 and INTS15. The core complex associates with protein phosphatase 2A subunits PPP2CA and PPP2R1A, to form the Integrator-PP2A (INTAC) complex.

The protein resides in the nucleus. It is found in the nucleus membrane. Its subcellular location is the cytoplasm. Its function is as follows. Component of the integrator complex, a multiprotein complex that terminates RNA polymerase II (Pol II) transcription in the promoter-proximal region of genes. The integrator complex provides a quality checkpoint during transcription elongation by driving premature transcription termination of transcripts that are unfavorably configured for transcriptional elongation: the complex terminates transcription by (1) catalyzing dephosphorylation of the C-terminal domain (CTD) of Pol II subunit POLR2A/RPB1 and SUPT5H/SPT5, (2) degrading the exiting nascent RNA transcript via endonuclease activity and (3) promoting the release of Pol II from bound DNA. The integrator complex is also involved in terminating the synthesis of non-coding Pol II transcripts, such as enhancer RNAs (eRNAs), small nuclear RNAs (snRNAs), telomerase RNAs and long non-coding RNAs (lncRNAs). Mediates recruitment of cytoplasmic dynein to the nuclear envelope, probably as component of the integrator complex. This chain is Integrator complex subunit 2, found in Homo sapiens (Human).